The chain runs to 758 residues: 5-methyltetrahydropteroyltriglutamate--homocysteine methyltransferase (758 aa).

5-methyltetrahydropteroyltri-L-glutamate contacts are provided by residues 16 to 19 and Lys-116; that span reads RELK. L-homocysteine is bound by residues 436–438 and Glu-489; that span reads IGS. Residues 436–438 and Glu-489 contribute to the L-methionine site; that span reads IGS. Residues 520–521 and Trp-566 contribute to the 5-methyltetrahydropteroyltri-L-glutamate site; that span reads RC. Residue Asp-604 participates in L-homocysteine binding. Asp-604 provides a ligand contact to L-methionine. Glu-610 lines the 5-methyltetrahydropteroyltri-L-glutamate pocket. His-646, Cys-648, and Glu-670 together coordinate Zn(2+). The Proton donor role is filled by His-699. Cys-731 contacts Zn(2+).

The protein belongs to the vitamin-B12 independent methionine synthase family. The cofactor is Zn(2+).

It carries out the reaction 5-methyltetrahydropteroyltri-L-glutamate + L-homocysteine = tetrahydropteroyltri-L-glutamate + L-methionine. Its pathway is amino-acid biosynthesis; L-methionine biosynthesis via de novo pathway; L-methionine from L-homocysteine (MetE route): step 1/1. Its function is as follows. Catalyzes the transfer of a methyl group from 5-methyltetrahydrofolate to homocysteine resulting in methionine formation. This Xylella fastidiosa (strain M23) protein is 5-methyltetrahydropteroyltriglutamate--homocysteine methyltransferase.